The sequence spans 107 residues: Antimicrobial peptide microplusin (107 aa).

An N-terminal signal peptide occupies residues 1–19 (MKSLLVCLVLAVVVLVASG). Intrachain disulfides connect Cys25–Cys60, Cys38–Cys88, and Cys49–Cys54. The disordered stretch occupies residues 86–107 (TDCDHSHGHEHSHGHEHGHGHH). Basic and acidic residues predominate over residues 87-107 (DCDHSHGHEHSHGHEHGHGHH).

It localises to the secreted. In terms of biological role, has bacteriostatic activity against Gram-positive bacteria, but not against Gram-negative bacteria. Has fungistatic activity against some but not all fungi. Binds and sequesters copper and iron ions. Copper-chelating is crucial for antimicrobial activity against M.luteus. This Ixodes scapularis (Black-legged tick) protein is Antimicrobial peptide microplusin.